Reading from the N-terminus, the 214-residue chain is uncharacterized protein (214 aa).

Catalysis depends on Tyr129, which acts as the Proton acceptor.

It belongs to the NAD(P)-dependent epimerase/dehydratase family.

This is an uncharacterized protein from Bacillus subtilis (strain 168).